A 130-amino-acid chain; its full sequence is 3-aminoacrylate deaminase RutC (130 aa).

It belongs to the RutC family.

It catalyses the reaction (Z)-3-aminoacrylate + H2O + H(+) = 3-oxopropanoate + NH4(+). Its function is as follows. Involved in pyrimidine catabolism. Catalyzes the deamination of 3-aminoacrylate to malonic semialdehyde, a reaction that can also occur spontaneously. RutC may facilitate the reaction and modulate the metabolic fitness, rather than catalyzing essential functions. The chain is 3-aminoacrylate deaminase RutC from Haliangium ochraceum (strain DSM 14365 / JCM 11303 / SMP-2).